The chain runs to 328 residues: Tetraacyldisaccharide 4'-kinase (328 aa).

55–62 provides a ligand contact to ATP; that stretch reads TAGGNGKT.

It belongs to the LpxK family.

The enzyme catalyses a lipid A disaccharide + ATP = a lipid IVA + ADP + H(+). The protein operates within glycolipid biosynthesis; lipid IV(A) biosynthesis; lipid IV(A) from (3R)-3-hydroxytetradecanoyl-[acyl-carrier-protein] and UDP-N-acetyl-alpha-D-glucosamine: step 6/6. Its function is as follows. Transfers the gamma-phosphate of ATP to the 4'-position of a tetraacyldisaccharide 1-phosphate intermediate (termed DS-1-P) to form tetraacyldisaccharide 1,4'-bis-phosphate (lipid IVA). The sequence is that of Tetraacyldisaccharide 4'-kinase from Shigella boydii serotype 4 (strain Sb227).